Consider the following 117-residue polypeptide: Flagellar transcriptional regulator FlhD (117 aa).

It belongs to the FlhD family. Homodimer; disulfide-linked. Forms a heterohexamer composed of two FlhC and four FlhD subunits. Each FlhC binds a FlhD dimer, forming a heterotrimer, and a hexamer assembles by dimerization of two heterotrimers.

The protein resides in the cytoplasm. Functionally, functions in complex with FlhC as a master transcriptional regulator that regulates transcription of several flagellar and non-flagellar operons by binding to their promoter region. Activates expression of class 2 flagellar genes, including fliA, which is a flagellum-specific sigma factor that turns on the class 3 genes. Also regulates genes whose products function in a variety of physiological pathways. The polypeptide is Flagellar transcriptional regulator FlhD (Erwinia amylovora (strain CFBP1430)).